The chain runs to 344 residues: rRNA 2'-O-methyltransferase fibrillarin (344 aa).

The disordered stretch occupies residues 1-113; the sequence is MGKPGFSPRG…GFKGGKTVTI (113 aa). Residues 8 to 107 show a composition bias toward gly residues; the sequence is PRGGGGGGGG…RGGGAGGFKG (100 aa). Arg-9, Arg-23, Arg-25, Arg-40, Arg-42, Arg-48, Arg-51, Arg-58, Arg-63, Arg-71, Arg-77, Arg-83, Arg-88, Arg-93, and Arg-98 each carry asymmetric dimethylarginine. Residues 197 to 198, 216 to 217, 241 to 242, and 261 to 264 each bind S-adenosyl-L-methionine; these read TT, EF, DA, and DVAQ.

It belongs to the methyltransferase superfamily. Fibrillarin family. In terms of assembly, component of box C/D small nucleolar ribonucleoprotein (snoRNP) particles. It is associated with the U3, U8 and U13 small nuclear RNAs. In terms of processing, by homology to other fibrillarins, some or all of the N-terminal domain arginines are modified to asymmetric dimethylarginine (DMA).

The protein localises to the nucleus. It localises to the nucleolus. The catalysed reaction is L-glutaminyl-[histone H2A] + S-adenosyl-L-methionine = N(5)-methyl-L-glutaminyl-[histone H2A] + S-adenosyl-L-homocysteine + H(+). In terms of biological role, S-adenosyl-L-methionine-dependent methyltransferase that has the ability to methylate both RNAs and proteins. Involved in pre-rRNA processing. Utilizes the methyl donor S-adenosyl-L-methionine to catalyze the site-specific 2'-hydroxyl methylation of ribose moieties in pre-ribosomal RNA. Site specificity is provided by a guide RNA that base pairs with the substrate. Methylation occurs at a characteristic distance from the sequence involved in base pairing with the guide RNA. Also acts as a protein methyltransferase by mediating methylation of 'Gln-105' of histone H2A (H2AQ105me), a modification that impairs binding of the FACT complex and is specifically present at 35S ribosomal DNA locus. This Drosophila melanogaster (Fruit fly) protein is rRNA 2'-O-methyltransferase fibrillarin.